Consider the following 492-residue polypeptide: Propanoyl-CoA:succinate CoA transferase (492 aa).

260–264 (GVGNI) serves as a coordination point for CoA. Glu-286 serves as the catalytic 5-glutamyl coenzyme A thioester intermediate. Residues Asn-376 and Gly-380 each coordinate CoA.

Belongs to the acetyl-CoA hydrolase/transferase family.

It carries out the reaction propanoyl-CoA + succinate = propanoate + succinyl-CoA. In terms of biological role, catalyzes the transfer of coenzyme A from propionyl-CoA to succinate. Could be part of a pathway that converts succinate to propionate. The protein is Propanoyl-CoA:succinate CoA transferase of Escherichia coli (strain K12).